Reading from the N-terminus, the 267-residue chain is 2-keto-3-deoxy-L-rhamnonate aldolase (267 aa).

The Proton acceptor role is filled by histidine 49. Glutamine 151 contacts substrate. Glutamate 153 is a binding site for Mg(2+). Residues alanine 178 and aspartate 179 each coordinate substrate. A Mg(2+)-binding site is contributed by aspartate 179.

It belongs to the HpcH/HpaI aldolase family. KDR aldolase subfamily. As to quaternary structure, homohexamer. Mg(2+) is required as a cofactor.

It carries out the reaction 2-dehydro-3-deoxy-L-rhamnonate = (S)-lactaldehyde + pyruvate. In terms of biological role, catalyzes the reversible retro-aldol cleavage of 2-keto-3-deoxy-L-rhamnonate (KDR) to pyruvate and lactaldehyde. This Klebsiella pneumoniae subsp. pneumoniae (strain ATCC 700721 / MGH 78578) protein is 2-keto-3-deoxy-L-rhamnonate aldolase.